The chain runs to 271 residues: Phosphonoacetaldehyde hydrolase (271 aa).

Aspartate 12 serves as the catalytic Nucleophile. The Mg(2+) site is built by aspartate 12 and alanine 14. The active-site Schiff-base intermediate with substrate is the lysine 54. Mg(2+) is bound at residue aspartate 188.

Belongs to the HAD-like hydrolase superfamily. PhnX family. In terms of assembly, homodimer. The cofactor is Mg(2+).

The catalysed reaction is phosphonoacetaldehyde + H2O = acetaldehyde + phosphate + H(+). Involved in phosphonate degradation. In Aliivibrio salmonicida (strain LFI1238) (Vibrio salmonicida (strain LFI1238)), this protein is Phosphonoacetaldehyde hydrolase.